A 348-amino-acid chain; its full sequence is Dihydroorotase (348 aa).

Residues His14 and His16 each coordinate Zn(2+). Residues 16 to 18 (HLR) and Asn42 contribute to the substrate site. Zn(2+) contacts are provided by Lys100, His137, and His175. Lys100 bears the N6-carboxylysine mark. Residue His137 coordinates substrate. Leu220 lines the substrate pocket. Asp248 contributes to the Zn(2+) binding site. Residue Asp248 is part of the active site. 2 residues coordinate substrate: His252 and Ala264.

The protein belongs to the metallo-dependent hydrolases superfamily. DHOase family. Class II DHOase subfamily. As to quaternary structure, homodimer. Zn(2+) is required as a cofactor.

The enzyme catalyses (S)-dihydroorotate + H2O = N-carbamoyl-L-aspartate + H(+). The protein operates within pyrimidine metabolism; UMP biosynthesis via de novo pathway; (S)-dihydroorotate from bicarbonate: step 3/3. Its function is as follows. Catalyzes the reversible cyclization of carbamoyl aspartate to dihydroorotate. This is Dihydroorotase from Pseudomonas aeruginosa (strain LESB58).